The chain runs to 788 residues: Endonuclease MutS2 (788 aa).

Position 332 to 339 (332 to 339 (GPNTGGKT)) interacts with ATP. Positions 713–788 (VDLRGMDAEE…GTGVTVVELK (76 aa)) constitute a Smr domain.

This sequence belongs to the DNA mismatch repair MutS family. MutS2 subfamily. Homodimer. Binds to stalled ribosomes, contacting rRNA.

Functionally, endonuclease that is involved in the suppression of homologous recombination and thus may have a key role in the control of bacterial genetic diversity. In terms of biological role, acts as a ribosome collision sensor, splitting the ribosome into its 2 subunits. Detects stalled/collided 70S ribosomes which it binds and splits by an ATP-hydrolysis driven conformational change. Acts upstream of the ribosome quality control system (RQC), a ribosome-associated complex that mediates the extraction of incompletely synthesized nascent chains from stalled ribosomes and their subsequent degradation. Probably generates substrates for RQC. This is Endonuclease MutS2 from Clostridium botulinum (strain Okra / Type B1).